The sequence spans 416 residues: Chaperone protein dnaJ A6 (416 aa).

The 62-residue stretch at 12-73 (KYYEVLGVPK…EKRDIYDQYG (62 aa)) folds into the J domain. The segment at 133–217 (GSMKKLSLSR…CRASKVIQEK (85 aa)) adopts a CR-type zinc-finger fold. The Zn(2+) site is built by Cys146, Cys149, Cys162, Cys165, Cys189, Cys192, Cys205, and Cys208. CXXCXGXG motif repeat units follow at residues 146–153 (CPKCKGKG), 162–169 (CYGCHGVG), and 189–196 (CPECRGSG). The span at 380–399 (HDVNIEEEMRRKQYQRKQEA) shows a compositional bias: basic and acidic residues. Positions 380-416 (HDVNIEEEMRRKQYQRKQEAYDEDEEEDAPRVQCAQQ) are disordered.

Belongs to the DnaJ family. As to quaternary structure, interacts with ZFP1.

Its subcellular location is the nucleus. The protein resides in the cytoplasm. In terms of biological role, involved in disease resistance. Acts as a negative regulator of innate immunity to the rice blast fungus (Magnaporthe oryzae). Acts as a negative regulator of the pathogen-associated molecular pattern (PAMP)-triggered immunity (PTI) response through the inhibition of reactive oxygen species (ROS) accumulation and expression of defense-related genes. May function via the ubiquitin-proteasome degradation pathway. The sequence is that of Chaperone protein dnaJ A6 from Oryza sativa subsp. japonica (Rice).